Reading from the N-terminus, the 201-residue chain is Syndecan-2 (201 aa).

An N-terminal signal peptide occupies residues 1 to 18; it reads MQRAWILLTLGLMACVSA. Topologically, residues 19 to 144 are extracellular; the sequence is ETRAELTSDK…HSDNLFKRTE (126 aa). 3 O-linked (Xyl...) (glycosaminoglycan) serine glycosylation sites follow: S41, S55, and S57. Disordered stretches follow at residues 42–69 and 88–129; these read GLYP…PDLT and TMTL…KSTD. Polar residues predominate over residues 90–102; it reads TLKTQSITPTQTE. Residues 106-123 are compositionally biased toward basic and acidic residues; it reads ETDKKEFEISEAEEKQDP. S115 is modified (phosphoserine). A helical membrane pass occupies residues 145–169; sequence VLAAVIAGGVIGFLFAIFLILLLVY. Topologically, residues 170-201 are cytoplasmic; the sequence is RMRKKDEGSYDLGERKPSSAAYQKAPTKEFYA. The disordered stretch occupies residues 178–201; it reads SYDLGERKPSSAAYQKAPTKEFYA. S187 carries the post-translational modification Phosphoserine.

It belongs to the syndecan proteoglycan family. Interacts (via cytoplasmic domain) with SARM1. Forms a complex with SDCBP and PDCD6IP. O-glycosylated; contains both heparan sulfate and chondroitin sulfate.

Its subcellular location is the membrane. Cell surface proteoglycan which regulates dendritic arbor morphogenesis. In Rattus norvegicus (Rat), this protein is Syndecan-2 (Sdc2).